The primary structure comprises 466 residues: Asparagine--tRNA ligase (466 aa).

Belongs to the class-II aminoacyl-tRNA synthetase family. As to quaternary structure, homodimer.

It is found in the cytoplasm. It carries out the reaction tRNA(Asn) + L-asparagine + ATP = L-asparaginyl-tRNA(Asn) + AMP + diphosphate + H(+). This chain is Asparagine--tRNA ligase, found in Idiomarina loihiensis (strain ATCC BAA-735 / DSM 15497 / L2-TR).